The chain runs to 217 residues: MAFAVSTACRPSLLLPPRQRSSPPRPRPLLCTPSTAAFRRGALSATTTPTPARAALPSTTGRNRIVCGKVSKGSAAPNFTLRDQDGRAVSLSKFKGRPVVVYFYPADETPGCTKQACAFRDSYEKFKKAGAEVIGISGDDAASHKEFKKKYKLPFTLLSDEGNKVRKEWGVPADLFGTLPGRQTYVLDKNGVVQYIYNNQFQPEKHIGETLKILQSL.

Residues Met-1–Val-66 constitute a chloroplast transit peptide. The region spanning Val-70–Leu-217 is the Thioredoxin domain. Catalysis depends on Cys-112, which acts as the Cysteine sulfenic acid (-SOH) intermediate. A disulfide bridge connects residues Cys-112 and Cys-117.

The protein belongs to the peroxiredoxin family. BCP/PrxQ subfamily. Monomer.

Its subcellular location is the plastid. It localises to the chloroplast thylakoid lumen. It carries out the reaction a hydroperoxide + [thioredoxin]-dithiol = an alcohol + [thioredoxin]-disulfide + H2O. Functionally, thiol-specific peroxidase that catalyzes the reduction of hydrogen peroxide and organic hydroperoxides to water and alcohols, respectively. Plays a role in cell protection against oxidative stress by detoxifying peroxides. This Oryza sativa subsp. indica (Rice) protein is Putative peroxiredoxin Q, chloroplastic.